The primary structure comprises 439 residues: Proline--tRNA ligase (439 aa).

It belongs to the class-II aminoacyl-tRNA synthetase family. ProS type 2 subfamily. As to quaternary structure, homodimer.

The protein localises to the cytoplasm. The catalysed reaction is tRNA(Pro) + L-proline + ATP = L-prolyl-tRNA(Pro) + AMP + diphosphate. Its function is as follows. Catalyzes the attachment of proline to tRNA(Pro) in a two-step reaction: proline is first activated by ATP to form Pro-AMP and then transferred to the acceptor end of tRNA(Pro). The chain is Proline--tRNA ligase from Nitrobacter winogradskyi (strain ATCC 25391 / DSM 10237 / CIP 104748 / NCIMB 11846 / Nb-255).